Consider the following 252-residue polypeptide: L-aspartate dehydrogenase (252 aa).

2 residues coordinate NAD(+): Ala-119 and Asn-175. His-203 is a catalytic residue.

Belongs to the L-aspartate dehydrogenase family.

It carries out the reaction L-aspartate + NADP(+) + H2O = oxaloacetate + NH4(+) + NADPH + H(+). The catalysed reaction is L-aspartate + NAD(+) + H2O = oxaloacetate + NH4(+) + NADH + H(+). The protein operates within cofactor biosynthesis; NAD(+) biosynthesis; iminoaspartate from L-aspartate (dehydrogenase route): step 1/1. In terms of biological role, specifically catalyzes the NAD or NADP-dependent dehydrogenation of L-aspartate to iminoaspartate. The chain is L-aspartate dehydrogenase from Methanospirillum hungatei JF-1 (strain ATCC 27890 / DSM 864 / NBRC 100397 / JF-1).